A 623-amino-acid polypeptide reads, in one-letter code: Bifunctional methionine biosynthesis protein MetXA/MetW (623 aa).

Residues 1–17 are compositionally biased toward polar residues; that stretch reads MTSGRSTRVTMFESQAS. The tract at residues 1 to 30 is disordered; the sequence is MTSGRSTRVTMFESQASMGEPSNEDLSSTD. The AB hydrolase-1 domain occupies 77-385; it reads NAVLVCHAVS…TTNAGHDAFL (309 aa). The Nucleophile role is filled by Ser183. A substrate-binding site is contributed by Arg253. Residues Asp348 and His381 contribute to the active site. Residue Asp382 participates in substrate binding. Residues 417–619 form a metW region; sequence NVDEESILEI…NADTAVIAFH (203 aa).

This sequence in the N-terminal section; belongs to the AB hydrolase superfamily. MetX family. The protein in the C-terminal section; belongs to the MetW family. As to quaternary structure, homodimer.

Its subcellular location is the cytoplasm. The enzyme catalyses L-homoserine + acetyl-CoA = O-acetyl-L-homoserine + CoA. It functions in the pathway amino-acid biosynthesis; L-methionine biosynthesis via de novo pathway; O-acetyl-L-homoserine from L-homoserine: step 1/1. Transfers an acetyl group from acetyl-CoA to L-homoserine, forming acetyl-L-homoserine. The sequence is that of Bifunctional methionine biosynthesis protein MetXA/MetW from Rhodopirellula baltica (strain DSM 10527 / NCIMB 13988 / SH1).